We begin with the raw amino-acid sequence, 1387 residues long: DNA-directed RNA polymerase subunit beta' (1387 aa).

Zn(2+)-binding residues include cysteine 70, cysteine 72, cysteine 85, and cysteine 88. Mg(2+)-binding residues include aspartate 461, aspartate 463, and aspartate 465. Zn(2+) is bound by residues cysteine 808, cysteine 882, cysteine 889, and cysteine 892. The disordered stretch occupies residues 1367 to 1387 (QDEAKGVGQETPRLSGQEAAE).

The protein belongs to the RNA polymerase beta' chain family. As to quaternary structure, the RNAP catalytic core consists of 2 alpha, 1 beta, 1 beta' and 1 omega subunit. When a sigma factor is associated with the core the holoenzyme is formed, which can initiate transcription. Mg(2+) serves as cofactor. The cofactor is Zn(2+).

The catalysed reaction is RNA(n) + a ribonucleoside 5'-triphosphate = RNA(n+1) + diphosphate. DNA-dependent RNA polymerase catalyzes the transcription of DNA into RNA using the four ribonucleoside triphosphates as substrates. The sequence is that of DNA-directed RNA polymerase subunit beta' from Granulibacter bethesdensis (strain ATCC BAA-1260 / CGDNIH1).